The following is a 516-amino-acid chain: uncharacterized protein (516 aa).

Residues 1 to 22 (MLYRFWKTGLAIFMPGCILLSS) form the signal peptide. Residue Cys23 is the site of N-palmitoyl cysteine attachment. The S-diacylglycerol cysteine moiety is linked to residue Cys23.

This sequence belongs to the MG067/MG068/MG395 family.

Its subcellular location is the cell membrane. This is an uncharacterized protein from Mycoplasma genitalium (strain ATCC 33530 / DSM 19775 / NCTC 10195 / G37) (Mycoplasmoides genitalium).